The sequence spans 260 residues: Snake venom serine proteinase 4a (260 aa).

An N-terminal signal peptide occupies residues 1-18 (MVLIRVLANLLILQLSYA). Residues 19 to 24 (QMSSEL) constitute a propeptide that is removed on maturation. In terms of domain architecture, Peptidase S1 spans 25–251 (VTGGDECNRN…HLDWIQRIIA (227 aa)). Intrachain disulfides connect Cys31–Cys163, Cys50–Cys66, Cys98–Cys258, Cys142–Cys212, Cys174–Cys191, and Cys202–Cys227. The Charge relay system role is filled by His65. Asn103 carries an N-linked (GlcNAc...) asparagine glycan. Residue Asp110 is the Charge relay system of the active site. Catalysis depends on Ser206, which acts as the Charge relay system.

The protein belongs to the peptidase S1 family. Snake venom subfamily. As to quaternary structure, monomer. In terms of tissue distribution, expressed by the venom gland.

Its subcellular location is the secreted. Functionally, snake venom serine protease that may act in the hemostasis system of the prey. In Crotalus adamanteus (Eastern diamondback rattlesnake), this protein is Snake venom serine proteinase 4a.